A 411-amino-acid polypeptide reads, in one-letter code: Glucose-1-phosphate adenylyltransferase (411 aa).

Alpha-D-glucose 1-phosphate is bound by residues G164, 179 to 180 (EK), and S197.

The protein belongs to the bacterial/plant glucose-1-phosphate adenylyltransferase family. In terms of assembly, homotetramer.

It catalyses the reaction alpha-D-glucose 1-phosphate + ATP + H(+) = ADP-alpha-D-glucose + diphosphate. The protein operates within glycan biosynthesis; glycogen biosynthesis. Functionally, involved in the biosynthesis of ADP-glucose, a building block required for the elongation reactions to produce glycogen. Catalyzes the reaction between ATP and alpha-D-glucose 1-phosphate (G1P) to produce pyrophosphate and ADP-Glc. The polypeptide is Glucose-1-phosphate adenylyltransferase (Corynebacterium kroppenstedtii (strain DSM 44385 / JCM 11950 / CIP 105744 / CCUG 35717)).